The following is a 235-amino-acid chain: Putative N-acetylmannosamine-6-phosphate 2-epimerase (235 aa).

This sequence belongs to the NanE family.

The catalysed reaction is an N-acyl-D-glucosamine 6-phosphate = an N-acyl-D-mannosamine 6-phosphate. It functions in the pathway amino-sugar metabolism; N-acetylneuraminate degradation; D-fructose 6-phosphate from N-acetylneuraminate: step 3/5. Its function is as follows. Converts N-acetylmannosamine-6-phosphate (ManNAc-6-P) to N-acetylglucosamine-6-phosphate (GlcNAc-6-P). This chain is Putative N-acetylmannosamine-6-phosphate 2-epimerase, found in Enterobacter sp. (strain 638).